Here is a 211-residue protein sequence, read N- to C-terminus: FMN-dependent NADH:quinone oxidoreductase 2 (211 aa).

102–105 contributes to the FMN binding site; sequence MWNF.

It belongs to the azoreductase type 1 family. Homodimer. FMN serves as cofactor.

It catalyses the reaction 2 a quinone + NADH + H(+) = 2 a 1,4-benzosemiquinone + NAD(+). It carries out the reaction N,N-dimethyl-1,4-phenylenediamine + anthranilate + 2 NAD(+) = 2-(4-dimethylaminophenyl)diazenylbenzoate + 2 NADH + 2 H(+). In terms of biological role, quinone reductase that provides resistance to thiol-specific stress caused by electrophilic quinones. Also exhibits azoreductase activity. Catalyzes the reductive cleavage of the azo bond in aromatic azo compounds to the corresponding amines. The sequence is that of FMN-dependent NADH:quinone oxidoreductase 2 from Bacillus thuringiensis subsp. konkukian (strain 97-27).